The sequence spans 478 residues: MANKVGRITQVIGAVVDVQFDGHLPEILNALETTNQGNRLVLEVAQHLGESTVRCIAMDATEGLVRGLEVTDTGAPIQVPVGAGTLGRIMNVIGEPVDELGPIEAEATRGIHQPAPSYAEQATEAEILVTGIKVVDLLAPYAKGGKVGLFGGAGVGKTVLIMELINNVAKAHGGYSVFAGVGERTREGNDLYHEMIESNVNKDPHENGGSAAGSKCALVYGQMNEPPGARARVALTGLTVAEHFRDQGQDVLFFVDNIFRFTQAGSEVSALLGRIPSAVGYQPTLATDMGALQERITTTTKGSITSVQAIYVPADDLTDPAPAASFAHLDATTVLSRSIAEKGIYPAVDPLDSTSRMLSPAILGDEHYNTARQVQQTLQRYKALQDIIAILGMDELSEEDKITVARARKIERFLSQPFHVAEVFTGSPGKLVDLKDTIAGFKGLVEGKYDYLPEQAFYMVGSMEEAIEKGKKLAAEAA.

Residue 151–158 (GGAGVGKT) participates in ATP binding.

This sequence belongs to the ATPase alpha/beta chains family. As to quaternary structure, F-type ATPases have 2 components, CF(1) - the catalytic core - and CF(0) - the membrane proton channel. CF(1) has five subunits: alpha(3), beta(3), gamma(1), delta(1), epsilon(1). CF(0) has three main subunits: a(1), b(2) and c(9-12). The alpha and beta chains form an alternating ring which encloses part of the gamma chain. CF(1) is attached to CF(0) by a central stalk formed by the gamma and epsilon chains, while a peripheral stalk is formed by the delta and b chains.

It localises to the cell inner membrane. It catalyses the reaction ATP + H2O + 4 H(+)(in) = ADP + phosphate + 5 H(+)(out). Its function is as follows. Produces ATP from ADP in the presence of a proton gradient across the membrane. The catalytic sites are hosted primarily by the beta subunits. The chain is ATP synthase subunit beta from Xanthobacter autotrophicus (strain ATCC BAA-1158 / Py2).